We begin with the raw amino-acid sequence, 304 residues long: RNA polymerase II holoenzyme cyclin-like subunit (304 aa).

Positions 43–174 constitute a Cyclin N-terminal domain; that stretch reads TIHDSKANKQ…LIEELQSYLI (132 aa).

The protein belongs to the cyclin family. Cyclin C subfamily. As to quaternary structure, component of the SRB8-11 complex, a regulatory module of the Mediator complex.

The protein localises to the nucleus. Its function is as follows. Component of the SRB8-11 complex. The SRB8-11 complex is a regulatory module of the Mediator complex which is itself involved in regulation of basal and activated RNA polymerase II-dependent transcription. The SRB8-11 complex may be involved in the transcriptional repression of a subset of genes regulated by Mediator. It may inhibit the association of the Mediator complex with RNA polymerase II to form the holoenzyme complex. The SRB8-11 complex phosphorylates the C-terminal domain (CTD) of the largest subunit of RNA polymerase II. The sequence is that of RNA polymerase II holoenzyme cyclin-like subunit (SSN8) from Kluyveromyces lactis (strain ATCC 8585 / CBS 2359 / DSM 70799 / NBRC 1267 / NRRL Y-1140 / WM37) (Yeast).